Consider the following 895-residue polypeptide: MILLAVLFLCFFSSYSASVKGHTTGLSLNNERLYKLTYSTEVFLDGGKGKLKDSVGYRISSDVDVVLLWRNPDGDDDQLIQVTITAVNVENVNQQRGEKSIFKGKTTPKIIGKDNLEALQRPVLLHLVRGKVKEFYSYENEPVGIENLKRGLASLFQMQLSSGTTNEVDISGDCKVTYQAQQDKVVKTKALDTCKIERSGFTTVNQVLGVSSKATSVTTYKIEDSFVTAVHAEETRDFSLNFLQAIAGKIVSKQKLELKTTEAGPRMVPGKQVAGVIKALDSKYTAIPIVGQVLQSACQGCPSLAEHWQSIRKHLEPENLSNAKAVSSFLAFIQHLRTARREEILQILKAEKKEVLPQLVDAVTSAQTPDSLEAILDFLDFKSDSSIVLQERFLYACGFASHPDEELLRALLSKFKGSFASNDIRETVMIIIGALVRKLCQNEGCKLKAVVEAKKLILGGLEKPEKKEDTTMYLLALKNALLPEGIPLLLKYAEAGEGPVSHLATTVLQRYDVSFITDEVKKTLNRIYHQNRKIHEKTVRTTAAAVILKSNPSYMDVKNILLSIGELPKEMNKYMLTFVRDILNFEMPSSKMIRRVLKEMVAHNYDRFSKSGSSSAYTGYIERSPHAASTYSLDMLYSGSGILRRSNLNVFQYLGKAGLHGSQVVIEAQGLESLIAATPDEGEENLDSYAGMSAILFDVQLRPVTFFNGYSDLMSKMLSASGDPVSVVKGLILLIDHSQDIQLQSGLKANMEIQGGLAIDISGSMEFSLWYRESKTRVKNRVAVVIDSAVTVDSSFVKAGLESRAETEAGLEFISTVQFSQYPFLVCMQMDRAEAPFRQFETKYERLSTGRGYVSRRRKESLVSGYELPLHQENSEMCNMVFPPQPESDNSGGWF.

An N-terminal signal peptide occupies residues 1-18 (MILLAVLFLCFFSSYSAS). One can recognise a Vitellogenin domain in the interval 28–659 (LNNERLYKLT…VFQYLGKAGL (632 aa)). Cys174 and Cys194 are joined by a disulfide.

In terms of assembly, heterodimer; heterodimerizes with the protein disulfide isomerase (P4HB/PDI). Interacts with APOB. Interacts with PRAP1.

The protein resides in the endoplasmic reticulum. The protein localises to the golgi apparatus. The catalysed reaction is a 1,2-diacyl-sn-glycero-3-phosphocholine(in) = a 1,2-diacyl-sn-glycero-3-phosphocholine(out). It catalyses the reaction a 1,2-diacyl-sn-glycero-3-phosphoethanolamine(in) = a 1,2-diacyl-sn-glycero-3-phosphoethanolamine(out). It carries out the reaction a cholesterol ester(in) = a cholesterol ester(out). The enzyme catalyses a triacyl-sn-glycerol(in) = a triacyl-sn-glycerol(out). Functionally, catalyzes the transport of triglyceride, cholesteryl ester, and phospholipid between phospholipid surfaces. Required for the assembly and secretion of plasma lipoproteins that contain apolipoprotein B. May be involved in regulating cholesteryl ester biosynthesis in cells that produce lipoproteins. The protein is Microsomal triglyceride transfer protein large subunit (MTTP) of Mesocricetus auratus (Golden hamster).